We begin with the raw amino-acid sequence, 152 residues long: Snaclec coagulation factor IX/factor X-binding protein subunit A (152 aa).

The first 23 residues, 1-23 (MGRFIFLSFGLLVVFLSLSGTGA), serve as a signal peptide directing secretion. Intrachain disulfides connect C25–C36, C53–C150, and C125–C142. Residues 32–151 (YEGHCYNIFH…CGERNPFVCE (120 aa)) enclose the C-type lectin domain. Ca(2+) contacts are provided by S64, E66, and E70. Residue E151 coordinates Ca(2+).

This sequence belongs to the snaclec family. In terms of assembly, heterodimer of subunits A and B; disulfide-linked. In terms of tissue distribution, expressed by the venom gland.

Its subcellular location is the secreted. Functionally, anticoagulant protein which binds to the gamma-carboxyglutamic acid-domain regions of factors IX (F9) and factor X (F10) in the presence of calcium with a 1 to 1 stoichiometry. The sequence is that of Snaclec coagulation factor IX/factor X-binding protein subunit A from Gloydius halys (Chinese water mocassin).